Reading from the N-terminus, the 142-residue chain is Large ribosomal subunit protein uL13 (142 aa).

Belongs to the universal ribosomal protein uL13 family. In terms of assembly, part of the 50S ribosomal subunit.

Its function is as follows. This protein is one of the early assembly proteins of the 50S ribosomal subunit, although it is not seen to bind rRNA by itself. It is important during the early stages of 50S assembly. This Citrifermentans bemidjiense (strain ATCC BAA-1014 / DSM 16622 / JCM 12645 / Bem) (Geobacter bemidjiensis) protein is Large ribosomal subunit protein uL13.